We begin with the raw amino-acid sequence, 330 residues long: MSQPIKIAISGGAGQIAYSLLFRLASGELFGPNQLIELQVLEVPNALSALEGVKMEIEDCAFPLLSSIKICSDPYQAFEDIDYALLIGAKSRGPGMERRDLLQENSKIFVNQGQALNAVAKSSAKIFVVGNPCNTNCLIALNNAPSLKRENFYAMTRLDQNRATFFLSQKSQVSTKDVSCVTIWGNHSATQVPDFVNAKISQKPVETIIPDRQWLEKDFIESVQKRGAAIIQARGKSSAASAASALLDAMRDRILPTPTGQWFSTALLSDGNPYGIEEGLIFSFPCRVKKNGELSIVSGLKWDAFLEEKIKLTEQELKEEREMVSSILKI.

11–17 serves as a coordination point for NAD(+); the sequence is GGAGQIA. Residues Arg92 and Arg98 each contribute to the substrate site. NAD(+) contacts are provided by residues Asn105, Gln112, and 129–131; that span reads VGN. Residues Asn131 and Arg162 each coordinate substrate. His187 (proton acceptor) is an active-site residue.

This sequence belongs to the LDH/MDH superfamily. MDH type 2 family.

It catalyses the reaction (S)-malate + NAD(+) = oxaloacetate + NADH + H(+). Catalyzes the reversible oxidation of malate to oxaloacetate. The protein is Malate dehydrogenase of Protochlamydia amoebophila (strain UWE25).